Here is a 184-residue protein sequence, read N- to C-terminus: MSWRSESIWIEFITGSRKTSNFCWAFILFLGSLGFLLVGTSSYLGRNFISLFASQQIIFFPQGIVMSFYGIAGLFISCYLWCTIFWNVGSGYDLFDRKEGIVRIFRWGFPGKSRRIFLRFLMKDIQSIRIEVKEGVSTRRVLYMEIRGQGAIPLIRADENFTTREIEQKAAELAYFLRVPIEVF.

2 helical membrane passes run phenylalanine 22–serine 42 and isoleucine 57–serine 77.

It belongs to the Ycf4 family.

It localises to the plastid. Its subcellular location is the chloroplast thylakoid membrane. Seems to be required for the assembly of the photosystem I complex. In Lobularia maritima (Sweet alyssum), this protein is Photosystem I assembly protein Ycf4.